Reading from the N-terminus, the 510-residue chain is Lysine--tRNA ligase (510 aa).

Residues E420 and E427 each contribute to the Mg(2+) site.

The protein belongs to the class-II aminoacyl-tRNA synthetase family. In terms of assembly, homodimer. Mg(2+) serves as cofactor.

It localises to the cytoplasm. The catalysed reaction is tRNA(Lys) + L-lysine + ATP = L-lysyl-tRNA(Lys) + AMP + diphosphate. The sequence is that of Lysine--tRNA ligase from Ralstonia nicotianae (strain ATCC BAA-1114 / GMI1000) (Ralstonia solanacearum).